The primary structure comprises 45 residues: Photosystem II reaction center protein K (45 aa).

Residues 1-8 (MEAALLLA) constitute a propeptide that is removed on maturation. A helical transmembrane segment spans residues 24-44 (LPVIPVFFLLLAFVWQAAVGF).

This sequence belongs to the PsbK family. In terms of assembly, PSII is composed of 1 copy each of membrane proteins PsbA, PsbB, PsbC, PsbD, PsbE, PsbF, PsbH, PsbI, PsbJ, PsbK, PsbL, PsbM, PsbT, PsbX, PsbY, PsbZ, Psb30/Ycf12, peripheral proteins PsbO, CyanoQ (PsbQ), PsbU, PsbV and a large number of cofactors. It forms dimeric complexes.

It localises to the cellular thylakoid membrane. Its function is as follows. One of the components of the core complex of photosystem II (PSII). PSII is a light-driven water:plastoquinone oxidoreductase that uses light energy to abstract electrons from H(2)O, generating O(2) and a proton gradient subsequently used for ATP formation. It consists of a core antenna complex that captures photons, and an electron transfer chain that converts photonic excitation into a charge separation. The polypeptide is Photosystem II reaction center protein K (Synechococcus elongatus (strain ATCC 33912 / PCC 7942 / FACHB-805) (Anacystis nidulans R2)).